The chain runs to 921 residues: Isoleucine--tRNA ligase (921 aa).

Positions 57 to 67 (PYANGDIHMGH) match the 'HIGH' region motif. Glu552 lines the L-isoleucyl-5'-AMP pocket. A 'KMSKS' region motif is present at residues 593–597 (KMSKS). Lys596 serves as a coordination point for ATP. Zn(2+) is bound by residues Cys888, Cys891, Cys908, and Cys911.

This sequence belongs to the class-I aminoacyl-tRNA synthetase family. IleS type 1 subfamily. As to quaternary structure, monomer. It depends on Zn(2+) as a cofactor.

The protein resides in the cytoplasm. It catalyses the reaction tRNA(Ile) + L-isoleucine + ATP = L-isoleucyl-tRNA(Ile) + AMP + diphosphate. Functionally, catalyzes the attachment of isoleucine to tRNA(Ile). As IleRS can inadvertently accommodate and process structurally similar amino acids such as valine, to avoid such errors it has two additional distinct tRNA(Ile)-dependent editing activities. One activity is designated as 'pretransfer' editing and involves the hydrolysis of activated Val-AMP. The other activity is designated 'posttransfer' editing and involves deacylation of mischarged Val-tRNA(Ile). This chain is Isoleucine--tRNA ligase, found in Bacillus cereus (strain AH820).